Here is a 358-residue protein sequence, read N- to C-terminus: Phospho-N-acetylmuramoyl-pentapeptide-transferase (358 aa).

10 consecutive transmembrane segments (helical) span residues tyrosine 19 to glycine 39, threonine 71 to leucine 91, tyrosine 95 to tyrosine 115, leucine 126 to leucine 146, valine 166 to serine 186, glycine 194 to alanine 214, leucine 237 to tyrosine 257, valine 261 to leucine 281, isoleucine 286 to valine 306, and valine 336 to lysine 356.

This sequence belongs to the glycosyltransferase 4 family. MraY subfamily. Mg(2+) serves as cofactor.

It localises to the cell inner membrane. The catalysed reaction is UDP-N-acetyl-alpha-D-muramoyl-L-alanyl-gamma-D-glutamyl-meso-2,6-diaminopimeloyl-D-alanyl-D-alanine + di-trans,octa-cis-undecaprenyl phosphate = di-trans,octa-cis-undecaprenyl diphospho-N-acetyl-alpha-D-muramoyl-L-alanyl-D-glutamyl-meso-2,6-diaminopimeloyl-D-alanyl-D-alanine + UMP. It functions in the pathway cell wall biogenesis; peptidoglycan biosynthesis. Functionally, catalyzes the initial step of the lipid cycle reactions in the biosynthesis of the cell wall peptidoglycan: transfers peptidoglycan precursor phospho-MurNAc-pentapeptide from UDP-MurNAc-pentapeptide onto the lipid carrier undecaprenyl phosphate, yielding undecaprenyl-pyrophosphoryl-MurNAc-pentapeptide, known as lipid I. This Pseudoalteromonas atlantica (strain T6c / ATCC BAA-1087) protein is Phospho-N-acetylmuramoyl-pentapeptide-transferase.